The following is a 297-amino-acid chain: Putative thiosulfate sulfurtransferase SseA (297 aa).

2 consecutive Rhodanese domains span residues 31–138 (GAPG…ETTL) and 168–286 (ILDA…VPIV). The active-site Cysteine persulfide intermediate is the Cys245. Arg250 provides a ligand contact to substrate.

It carries out the reaction thiosulfate + hydrogen cyanide = thiocyanate + sulfite + 2 H(+). This is Putative thiosulfate sulfurtransferase SseA (sseA) from Mycobacterium bovis (strain ATCC BAA-935 / AF2122/97).